We begin with the raw amino-acid sequence, 242 residues long: Myogenic factor 6 (242 aa).

The tract at residues 30–63 (GSPLYPGSDGTLSPCQDQLPPEAGSDSSGEEHVL) is disordered. The 52-residue stretch at 93–144 (DRRKAATLRERRRLKKINEAFEALKRRTVANPNQRLPKVEILRSAISYIERL) folds into the bHLH domain. Residues 190-210 (ASDHSRALGGSPKAGGSMVES) are disordered.

In terms of assembly, efficient DNA binding requires dimerization with another bHLH protein. Skeletal muscle.

The protein localises to the nucleus. In terms of biological role, involved in muscle differentiation (myogenic factor). Induces fibroblasts to differentiate into myoblasts. Probable sequence specific DNA-binding protein. The protein is Myogenic factor 6 (MYF6) of Gallus gallus (Chicken).